Here is a 469-residue protein sequence, read N- to C-terminus: MVLVAIGVVVAAAVVVSSLLLRWNEVRYSRKRGLPPGTMGWPLFGETTEFLKQGPSFMKARRLRYGSVFRTHILGCPTVVCMEAELNRRALASEGRGFVPGYPQSMLDILGRNNIAAVQGPLHRAMRGAMLSLVRPAMIRSSLLPKIDAFMRSHLAAWSSSSSSAVVDIQAKTKEMALLSALRQIAGVSAGPLSDALKAELYTLVLGTISLPINLPGTNYYQGFKARKKLVAMLEQMIAERRSSGQVHDDMLDALLTGVEGTREKLTDEQIIDLIITLIYSGYETMSTTSMMAVKYLSDHPKALEQLRKEHFDIRKGKAPEDAIDWNDFKSMTFTRAVIFETLRLATVVNGLLRKTTQDVEMNGYVIPKGWRIYVYTREINYDPFLYPDPMTFNPWRWLEKNMESHPHFMLFGGGSRMCPGKEVGTVEIATFLHYFVTQYRWEEEGNNTILKFPRVEAPNGLHIRVQDY.

A helical membrane pass occupies residues 1 to 21 (MVLVAIGVVVAAAVVVSSLLL). Heme is bound at residue C419.

This sequence belongs to the cytochrome P450 family. The cofactor is heme. Expressed at low levels in all the tissues, but preferentially in the leaf sheath.

It localises to the membrane. The catalysed reaction is 6-deoxoteasterone + reduced [NADPH--hemoprotein reductase] + O2 = 6alpha-hydroxyteasterone + oxidized [NADPH--hemoprotein reductase] + H2O + H(+). It carries out the reaction 6alpha-hydroxytyphasterol + reduced [NADPH--hemoprotein reductase] + O2 = teasterone + oxidized [NADPH--hemoprotein reductase] + 2 H2O + H(+). The enzyme catalyses 3-dehydro-6-deoxoteasterone + reduced [NADPH--hemoprotein reductase] + O2 = 3-dehydro-6alpha-hydroxyteasterone + oxidized [NADPH--hemoprotein reductase] + H2O + H(+). It catalyses the reaction 3-dehydro-6alpha-hydroxyteasterone + reduced [NADPH--hemoprotein reductase] + O2 = 3-dehydroteasterone + oxidized [NADPH--hemoprotein reductase] + 2 H2O + H(+). The catalysed reaction is 6-deoxotyphasterol + reduced [NADPH--hemoprotein reductase] + O2 = 6alpha-hydroxytyphasterol + oxidized [NADPH--hemoprotein reductase] + H2O + H(+). It carries out the reaction 6alpha-hydroxytyphasterol + reduced [NADPH--hemoprotein reductase] + O2 = typhasterol + oxidized [NADPH--hemoprotein reductase] + 2 H2O + H(+). The enzyme catalyses 3-dehydro-6-deoxoteasterone + 2 reduced [NADPH--hemoprotein reductase] + 2 O2 = 3-dehydroteasterone + 2 oxidized [NADPH--hemoprotein reductase] + 3 H2O + 2 H(+). It catalyses the reaction 6-deoxoteasterone + 2 reduced [NADPH--hemoprotein reductase] + 2 O2 = teasterone + 2 oxidized [NADPH--hemoprotein reductase] + 3 H2O + 2 H(+). The catalysed reaction is 6-deoxotyphasterol + 2 reduced [NADPH--hemoprotein reductase] + 2 O2 = typhasterol + 2 oxidized [NADPH--hemoprotein reductase] + 3 H2O + 2 H(+). It functions in the pathway plant hormone biosynthesis; brassinosteroid biosynthesis. Catalyzes the C6-oxidation step in brassinosteroids biosynthesis. May convert 6-deoxoteasterone (6-deoxoTE) to teasterone (TE), 3-dehydro-6-deoxoteasterone (6-deoxo3DT, 6-deoxo3DHT) to 3-dehydroteasterone (3DT, 3-DHT), and 6-deoxotyphasterol (6-deoxoTY) to typhasterol (TY). Involved in the organization and elongation of the leaf and stem cells. Not able to convert 6-deoxocastasterone (6-deoxoCS) and castasterone (CS) to brassinolide (BL). This is Cytochrome P450 85A1 from Oryza sativa subsp. japonica (Rice).